The sequence spans 423 residues: Histidine--tRNA ligase 2 (423 aa).

The protein belongs to the class-II aminoacyl-tRNA synthetase family. As to quaternary structure, homodimer.

It localises to the cytoplasm. It catalyses the reaction tRNA(His) + L-histidine + ATP = L-histidyl-tRNA(His) + AMP + diphosphate + H(+). This is Histidine--tRNA ligase 2 from Bacillus cereus (strain ATCC 14579 / DSM 31 / CCUG 7414 / JCM 2152 / NBRC 15305 / NCIMB 9373 / NCTC 2599 / NRRL B-3711).